The sequence spans 475 residues: Subtilisin-like protease PopC (475 aa).

Disordered stretches follow at residues 1–27 and 57–106; these read MKSY…EQGE and TLPG…QTGA. In terms of domain architecture, Peptidase S8 spans 165–475; sequence NRGMSSLAER…KTGKGLAVFR (311 aa). Active-site charge relay system residues include Asp201, His243, and Ser423.

Belongs to the peptidase S8 family. As to quaternary structure, interacts with PopD in non-starving cells.

It is found in the cytoplasm. The protein resides in the periplasm. It localises to the secreted. With respect to regulation, in non-starving cells, secretion and protease activity are inhibited by formation of a cytoplasmic complex with PopD. In response to starvation, PopD is degraded in a RelA- and FtsH(D)-dependent manner, thereby releasing pre-formed PopC for secretion. Secreted and active during starvation, and rapidly degraded upon secretion. Secretion is significantly and reversibly reduced by carbonyl cyanide m-chlorophenyl hydrazine (CCCP), which dissipates or reduces the proton motive force (PMF), and by nigericin, which affects the pH gradient. In terms of biological role, required for fruiting body formation, a multicellular developmental program that is induced in response to starvation. Acts as a subtilisin-like protease that directly cleaves the CsgA precursor protein (p25) on the cell surface to generate the intercellular C-signal protein (p17) in starving cells. Preferentially acts in cis, i.e. PopC secreted by a cell only cleaves p25 on that cell. May also be important for processing of other protein(s) that are important for development. The polypeptide is Subtilisin-like protease PopC (Myxococcus xanthus (strain DK1622)).